The chain runs to 195 residues: Imidazoleglycerol-phosphate dehydratase (195 aa).

It belongs to the imidazoleglycerol-phosphate dehydratase family.

It is found in the cytoplasm. It catalyses the reaction D-erythro-1-(imidazol-4-yl)glycerol 3-phosphate = 3-(imidazol-4-yl)-2-oxopropyl phosphate + H2O. It participates in amino-acid biosynthesis; L-histidine biosynthesis; L-histidine from 5-phospho-alpha-D-ribose 1-diphosphate: step 6/9. The chain is Imidazoleglycerol-phosphate dehydratase from Endomicrobium trichonymphae.